Here is a 93-residue protein sequence, read N- to C-terminus: Small ribosomal subunit protein uS19 (93 aa).

Positions 73–93 (EFSPTRTYRGHNKKDKKIQKK) are disordered. The span at 80-93 (YRGHNKKDKKIQKK) shows a compositional bias: basic residues.

It belongs to the universal ribosomal protein uS19 family.

Functionally, protein S19 forms a complex with S13 that binds strongly to the 16S ribosomal RNA. The sequence is that of Small ribosomal subunit protein uS19 (rpsS) from Aster yellows phytoplasma.